A 278-amino-acid chain; its full sequence is Orotidine 5'-phosphate decarboxylase (278 aa).

Catalysis depends on lysine 96, which acts as the Proton donor.

This sequence belongs to the OMP decarboxylase family. Type 2 subfamily.

The enzyme catalyses orotidine 5'-phosphate + H(+) = UMP + CO2. It functions in the pathway pyrimidine metabolism; UMP biosynthesis via de novo pathway; UMP from orotate: step 2/2. In Salinispora tropica (strain ATCC BAA-916 / DSM 44818 / JCM 13857 / NBRC 105044 / CNB-440), this protein is Orotidine 5'-phosphate decarboxylase.